The sequence spans 71 residues: MAKSQAKKKRGHRLRNGGRDVLLSRGSTPSFSTHGRMTKSKKEILNKRKHKNPYDHTAVDDKDFFVPQKAA.

A compositionally biased stretch (basic residues) spans methionine 1–asparagine 16. 2 disordered regions span residues methionine 1–lysine 39 and lysine 51–alanine 71. Positions arginine 25 to glycine 35 are enriched in polar residues. Positions lysine 51–phenylalanine 64 are enriched in basic and acidic residues.

This is an uncharacterized protein from Bacillus subtilis (strain 168).